The primary structure comprises 593 residues: ABC1 family protein lscO (593 aa).

Disordered stretches follow at residues 1-29 (MDVA…GGKK) and 441-467 (PYKN…EERK). Basic and acidic residues-rich tracts occupy residues 8 to 22 (MERH…DDGT) and 457 to 467 (QRTKETPEERK).

The protein belongs to the protein kinase superfamily. ADCK protein kinase family.

Its function is as follows. ABC1 family protein; part of the gene cluster that mediates the biosynthesis of the lipopeptide antibiotics leucinostatins that show extensive biological activities, including antimalarial, antiviral, antibacterial, antifungal, and antitumor activities, as well as phytotoxic. The function of lcsO within the leucinostatins biosynthesis has not been identified yet. The protein is ABC1 family protein lscO of Purpureocillium lilacinum (Paecilomyces lilacinus).